Here is a 398-residue protein sequence, read N- to C-terminus: Isopenicillin N epimerase (398 aa).

Lys219 carries the N6-(pyridoxal phosphate)lysine modification. Positions 243-264 (PQVSWGYRPDGENPSDERNRFG) are disordered. Over residues 251 to 264 (PDGENPSDERNRFG) the composition is skewed to basic and acidic residues.

Belongs to the class-V pyridoxal-phosphate-dependent aminotransferase family. Pyridoxal 5'-phosphate is required as a cofactor.

The catalysed reaction is isopenicillin N = penicillin N. Its pathway is antibiotic biosynthesis; cephalosporin C biosynthesis. In terms of biological role, catalyzes the reversible isomerization between isopenicillin N and penicillin N. The chain is Isopenicillin N epimerase (cefD) from Amycolatopsis lactamdurans (Nocardia lactamdurans).